Consider the following 402-residue polypeptide: Beta sliding clamp (402 aa).

This sequence belongs to the beta sliding clamp family. Forms a ring-shaped head-to-tail homodimer around DNA which binds and tethers DNA polymerases and other proteins to the DNA. The DNA replisome complex has a single clamp-loading complex (3 tau and 1 each of delta, delta', psi and chi subunits) which binds 3 Pol III cores (1 core on the leading strand and 2 on the lagging strand) each with a beta sliding clamp dimer. Additional proteins in the replisome are other copies of gamma, psi and chi, Ssb, DNA helicase and RNA primase.

Its subcellular location is the cytoplasm. Confers DNA tethering and processivity to DNA polymerases and other proteins. Acts as a clamp, forming a ring around DNA (a reaction catalyzed by the clamp-loading complex) which diffuses in an ATP-independent manner freely and bidirectionally along dsDNA. Initially characterized for its ability to contact the catalytic subunit of DNA polymerase III (Pol III), a complex, multichain enzyme responsible for most of the replicative synthesis in bacteria; Pol III exhibits 3'-5' exonuclease proofreading activity. The beta chain is required for initiation of replication as well as for processivity of DNA replication. The chain is Beta sliding clamp (dnaN) from Mycobacterium tuberculosis (strain CDC 1551 / Oshkosh).